Consider the following 282-residue polypeptide: Protoheme IX farnesyltransferase (282 aa).

Helical transmembrane passes span 9-29 (LAKP…FLLA), 39-59 (LPLF…GCVF), 79-99 (LVTG…LLIL), 102-122 (LVLY…GFIV), 139-159 (VLGG…VVNI), 165-185 (LALF…IAML), 210-230 (IMLF…VLGS), 231-251 (ADLF…YKSI), and 261-281 (VFAK…CLTM).

Belongs to the UbiA prenyltransferase family. Protoheme IX farnesyltransferase subfamily.

The protein resides in the cell inner membrane. The catalysed reaction is heme b + (2E,6E)-farnesyl diphosphate + H2O = Fe(II)-heme o + diphosphate. It participates in porphyrin-containing compound metabolism; heme O biosynthesis; heme O from protoheme: step 1/1. Its function is as follows. Converts heme B (protoheme IX) to heme O by substitution of the vinyl group on carbon 2 of heme B porphyrin ring with a hydroxyethyl farnesyl side group. The protein is Protoheme IX farnesyltransferase of Francisella tularensis subsp. novicida (strain U112).